A 1441-amino-acid polypeptide reads, in one-letter code: Lysophospholipase NTE1 (1441 aa).

At 1-22 (MWLTSYVLPRLKNILLLQFHIT) the chain is on the lumenal side. The helical transmembrane segment at 23–43 (LPLNYLVLLLLSTVIITYLFL) threads the bilayer. Residues 44 to 1441 (RTRILSNYSQ…ENMLQRRNSI (1398 aa)) lie on the Cytoplasmic side of the membrane. Disordered regions lie at residues 154–173 (SNPS…PSND), 210–236 (THLN…TGEI), 376–445 (QDDT…NSSS), and 551–585 (NRTG…HFRN). Residues 376–388 (QDDTGSSASTIQK) show a composition bias toward polar residues. The span at 572–585 (SRTDRSESFDHFRN) shows a compositional bias: basic and acidic residues. A nucleoside 3',5'-cyclic phosphate is bound by residues 592–718 (NQFS…LTNS) and 707–836 (IYLK…VAKK). Residues 1137-1301 (LVLGGGGARG…VDNLPVTEMT (165 aa)) enclose the PNPLA domain. The GXGXXG signature appears at 1141–1146 (GGGARG). The short motif at 1168 to 1172 (GTSIG) is the GXSXG element. The active-site Nucleophile is the Ser-1170. Asp-1288 functions as the Proton acceptor in the catalytic mechanism. The DGA/G motif lies at 1288-1290 (DGG).

It belongs to the NTE family.

The protein localises to the endoplasmic reticulum membrane. The catalysed reaction is a 1-acyl-sn-glycero-3-phosphocholine + H2O = sn-glycerol 3-phosphocholine + a fatty acid + H(+). With respect to regulation, inhibited by organophosphorus esters. Its function is as follows. Intracellular phospholipase B that catalyzes the double deacylation of phosphatidylcholine (PC) to glycerophosphocholine (GroPCho). Plays an important role in membrane lipid homeostasis. Responsible for the rapid PC turnover in response to inositol, elevated temperatures, or when choline is present in the growth medium. This Kluyveromyces lactis (strain ATCC 8585 / CBS 2359 / DSM 70799 / NBRC 1267 / NRRL Y-1140 / WM37) (Yeast) protein is Lysophospholipase NTE1 (NTE1).